The sequence spans 184 residues: Elongation factor P (184 aa).

Belongs to the elongation factor P family.

The protein localises to the cytoplasm. Its pathway is protein biosynthesis; polypeptide chain elongation. Involved in peptide bond synthesis. Stimulates efficient translation and peptide-bond synthesis on native or reconstituted 70S ribosomes in vitro. Probably functions indirectly by altering the affinity of the ribosome for aminoacyl-tRNA, thus increasing their reactivity as acceptors for peptidyl transferase. The polypeptide is Elongation factor P (Mycoplasma mycoides subsp. mycoides SC (strain CCUG 32753 / NCTC 10114 / PG1)).